We begin with the raw amino-acid sequence, 206 residues long: Smr domain-containing protein C11H11.03c (206 aa).

One can recognise a Smr domain in the interval Ile-75 to Pro-150.

It localises to the cytoplasm. The protein localises to the nucleus. This Schizosaccharomyces pombe (strain 972 / ATCC 24843) (Fission yeast) protein is Smr domain-containing protein C11H11.03c.